Here is a 1962-residue protein sequence, read N- to C-terminus: PIII-type proteinase (1962 aa).

An N-terminal signal peptide occupies residues 1 to 33 (MQRKKKGLSILLAGTVALGALAVLPVGEIQAKA). Residues 34–187 (AISQQTKGSS…VTLAKVYYPT (154 aa)) constitute a propeptide that is removed on maturation. In terms of domain architecture, Peptidase S8 spans 191–697 (ANSMANVQAV…AGLVDVKAAI (507 aa)). Active-site charge relay system residues include Asp-217, His-281, and Ser-620. The disordered stretch occupies residues 1796-1938 (GKGDGTTGTS…KTGETTERPA (143 aa)). Positions 1797–1812 (KGDGTTGTSDKGGGQG) are enriched in gly residues. Composition is skewed to polar residues over residues 1856 to 1865 (RNGQLTSGTS) and 1890 to 1903 (SQPS…TNPA). An LPXTG sorting signal motif is present at residues 1927–1931 (LPKTG). The residue at position 1930 (Thr-1930) is a Pentaglycyl murein peptidoglycan amidated threonine. Positions 1931 to 1962 (GETTERPAFGFLGVIVVSLMGVLGLKRKQREE) are cleaved as a propeptide — removed by sortase.

Belongs to the peptidase S8 family.

It is found in the secreted. It localises to the cell wall. The catalysed reaction is Endopeptidase activity with very broad specificity, although some subsite preference have been noted, e.g. large hydrophobic residues in the P1 and P4 positions, and Pro in the P2 position. Best known for its action on caseins, although it has been shown to hydrolyze hemoglobin and oxidized insulin B-chain.. In terms of biological role, protease which breaks down milk proteins during the growth of the bacteria on milk. This Lactococcus lactis subsp. cremoris (strain SK11) protein is PIII-type proteinase (prtP).